Here is a 762-residue protein sequence, read N- to C-terminus: 5-methyltetrahydropteroyltriglutamate--homocysteine methyltransferase (762 aa).

5-methyltetrahydropteroyltri-L-glutamate contacts are provided by residues 17–20 (REWK) and K111. L-homocysteine contacts are provided by residues 435–437 (IGS) and E488. Residues 435–437 (IGS) and E488 each bind L-methionine. 5-methyltetrahydropteroyltri-L-glutamate-binding positions include 519 to 520 (RC) and W565. An L-homocysteine-binding site is contributed by D603. L-methionine is bound at residue D603. E609 contacts 5-methyltetrahydropteroyltri-L-glutamate. The Zn(2+) site is built by H645, C647, and E669. The active-site Proton donor is H698. C730 is a Zn(2+) binding site.

Belongs to the vitamin-B12 independent methionine synthase family. The cofactor is Zn(2+).

The catalysed reaction is 5-methyltetrahydropteroyltri-L-glutamate + L-homocysteine = tetrahydropteroyltri-L-glutamate + L-methionine. It participates in amino-acid biosynthesis; L-methionine biosynthesis via de novo pathway; L-methionine from L-homocysteine (MetE route): step 1/1. Functionally, catalyzes the transfer of a methyl group from 5-methyltetrahydrofolate to homocysteine resulting in methionine formation. The protein is 5-methyltetrahydropteroyltriglutamate--homocysteine methyltransferase of Bacillus cytotoxicus (strain DSM 22905 / CIP 110041 / 391-98 / NVH 391-98).